A 497-amino-acid chain; its full sequence is Vacuolar-processing enzyme beta-isozyme 1 (497 aa).

Residues 1 to 23 (MAARCWVWGFVVALLAVAAAADG) form the signal peptide. N153 carries N-linked (GlcNAc...) asparagine glycosylation. Residue H180 is part of the active site. The active-site Nucleophile is the C222. A disulfide bond links C255 and C269. N340 is a glycosylation site (N-linked (GlcNAc...) asparagine). Cystine bridges form between C432/C462 and C444/C479.

The protein belongs to the peptidase C13 family. Post-translationally, auto-catalytic activation. Expressed in developing seeds.

The protein resides in the protein storage vacuole. It carries out the reaction Hydrolysis of proteins and small molecule substrates at -Asn-|-Xaa- bonds.. Functionally, asparagine-specific endopeptidase that may be involved in processing of proteins targeted to vacuoles. Cysteine protease required for post-translational proteolysis of seed storage proteins in the protein storage vacuole (PSV) of developing seeds, by processing of proglutelin precursor to mature glutelin subunits, thus contributing to the formation of protein crystalline structures in PSV. The chain is Vacuolar-processing enzyme beta-isozyme 1 from Oryza sativa subsp. japonica (Rice).